The sequence spans 155 residues: 3-hydroxyacyl-[acyl-carrier-protein] dehydratase FabZ (155 aa).

Residue histidine 61 is part of the active site.

The protein belongs to the thioester dehydratase family. FabZ subfamily.

Its subcellular location is the cytoplasm. The catalysed reaction is a (3R)-hydroxyacyl-[ACP] = a (2E)-enoyl-[ACP] + H2O. Functionally, involved in unsaturated fatty acids biosynthesis. Catalyzes the dehydration of short chain beta-hydroxyacyl-ACPs and long chain saturated and unsaturated beta-hydroxyacyl-ACPs. This Synechococcus elongatus (strain ATCC 33912 / PCC 7942 / FACHB-805) (Anacystis nidulans R2) protein is 3-hydroxyacyl-[acyl-carrier-protein] dehydratase FabZ.